The primary structure comprises 558 residues: Atlastin-1 (558 aa).

Residues 1-27 form a disordered region; that stretch reads MAKNRRDRNSWGGFSEKTYEWSSEEEE. Residues 1–34 are N-terminal hypervariable region (HVR); sequence MAKNRRDRNSWGGFSEKTYEWSSEEEEPVKKAGP. At 1 to 449 the chain is on the cytoplasmic side; it reads MAKNRRDRNS…NIFHAARTPA (449 aa). Residues Ser-10, Ser-22, and Ser-23 each carry the phosphoserine modification. The GB1/RHD3-type G domain occupies 64 to 309; that stretch reads DKEVVAVSVA…LIPWLLSPES (246 aa). Residues Arg-77, Lys-78, Gly-79, Lys-80, Ser-81, Phe-82, Gln-148, Arg-217, Asp-218, Val-276, and Asn-279 each coordinate GDP. GTP is bound by residues Arg-77, Lys-78, Gly-79, Lys-80, Ser-81, and Phe-82. Ser-81 lines the Mg(2+) pocket. GTP is bound by residues Arg-217, Asp-218, and Val-276. Residues 347 to 438 form a 3HB (three-helix bundle) domain region; sequence MLQATAEANN…YIQYIKHNDS (92 aa). Lys-395 bears the N6-acetyllysine mark. The stretch at 412-439 forms a coiled coil; sequence EFSRRYLQQLESEIDELYIQYIKHNDSK. Residues 439-447 form a linker region; that stretch reads KNIFHAART. A helical transmembrane segment spans residues 450-470; that stretch reads TLFVVIFITYVIAGVTGFIGL. A topological domain (lumenal) is located at residue Asp-471. Residues 472–492 traverse the membrane as a helical segment; that stretch reads IIASLCNMIMGLTLITLCTWA. Residues 493–558 lie on the Cytoplasmic side of the membrane; sequence YIRYSGEYRE…STEQSEKKKM (66 aa). The interval 521–558 is autoinhibitory domain; sequence NEALYKLYSAAATHRHLYHQAFPTPKSESTEQSEKKKM.

It belongs to the TRAFAC class dynamin-like GTPase superfamily. GB1/RHD3 GTPase family. GB1 subfamily. Monomeric and homodimeric. The homodimer, transiently formed by two molecules on opposing membranes, is the active form mediating ER membrane fusion. Interacts with REEP1, REEP5, RTN3 and RTN4 (via the transmembrane region); these proteins are involved in endoplasmic reticulum tubular network organization. Interacts with ZFYVE27; both proteins are involved in endoplasmic reticulum tubular network organization. Interacts with ARL6IP1; both proteins are involved in endoplasmic reticulum tubular network organization. Interacts with SPAST; the interaction is direct, could recruit SPAST to Golgi membranes. Interacts (via N-terminal region) with MAP4K4 (via CNH regulatory domain). May interact with TMED2. Interacts with CPT1C. In terms of processing, phosphorylated. Phosphorylation, by different kinases, of the N-terminal hypervariable region (HVR) regulates the ATL1-mediated membrane tethering step.

It localises to the endoplasmic reticulum membrane. Its subcellular location is the golgi apparatus membrane. The protein localises to the cell projection. It is found in the axon. The catalysed reaction is GTP + H2O = GDP + phosphate + H(+). Functionally, atlastin-1 (ATL1) is a membrane-anchored GTPase that mediates the GTP-dependent fusion of endoplasmic reticulum (ER) membranes, maintaining the continuous ER network. It facilitates the formation of three-way junctions where ER tubules intersect. Two atlastin-1 on neighboring ER tubules bind GTP and form loose homodimers through the GB1/RHD3-type G domains and 3HB regions. Upon GTP hydrolysis, the 3HB regions tighten, pulling the membranes together to drive their fusion. After fusion, the homodimer disassembles upon release of inorganic phosphate (Pi). Subsequently, GDP dissociates, resetting the monomers to a conformation ready for a new fusion cycle. May also regulate more or less directly Golgi biogenesis. Indirectly regulates axonal development. The protein is Atlastin-1 of Macaca fascicularis (Crab-eating macaque).